A 665-amino-acid chain; its full sequence is F-box/LRR-repeat protein 3 (665 aa).

One can recognise an F-box domain in the interval 11–60 (KPFDLLSEELVFIILDLISPNPSDLKSFSLTCKSFYQLESKHRGSLKPLR). LRR repeat units lie at residues 61–81 (SDYL…DLTF), 82–108 (CPRV…DLSR), 109–134 (SGSF…DLSN), 135–159 (ATEM…KLGR), 160–185 (CKML…SLKW), 186–211 (CVGV…DLSY), 214–235 (ITGK…LLEG), 236–261 (CFGV…DASS), 262–287 (CQNL…DLSH), 288–312 (CSSV…IRLD), 313–338 (GCSV…SLSK), 339–364 (CVSV…DITC), 365–390 (CRKL…KMES), 391–416 (CSLV…DLTD), 419–440 (IDDE…KLGI), 441–466 (CLNI…DLYR), 467–492 (SVGI…NISY), 493–517 (CQDI…ESRG), 518–543 (CPNI…DLKK), 544–569 (CPSI…NVSD), and 594–619 (SSGL…KLHA).

This Arabidopsis thaliana (Mouse-ear cress) protein is F-box/LRR-repeat protein 3 (FBL3).